Here is a 178-residue protein sequence, read N- to C-terminus: Ribosome maturation factor RimM (178 aa).

The PRC barrel domain maps to 99 to 178 (EGDYYWHDLI…TIEVDWDAGF (80 aa)).

It belongs to the RimM family. Binds ribosomal protein uS19.

The protein localises to the cytoplasm. An accessory protein needed during the final step in the assembly of 30S ribosomal subunit, possibly for assembly of the head region. Essential for efficient processing of 16S rRNA. May be needed both before and after RbfA during the maturation of 16S rRNA. It has affinity for free ribosomal 30S subunits but not for 70S ribosomes. The sequence is that of Ribosome maturation factor RimM from Haemophilus influenzae (strain ATCC 51907 / DSM 11121 / KW20 / Rd).